The following is a 1005-amino-acid chain: Sorbin and SH3 domain-containing protein 1 homolog (1005 aa).

Disordered stretches follow at residues 1-31, 61-86, 99-153, 243-292, 386-409, 427-475, and 542-622; these read MMHH…PAAD, LDMK…STPS, YVDP…PHSA, NELK…FNSE, FEEK…FKND, TTKN…TAAA, and MHRK…SNEE. Over residues 11–25 the composition is skewed to polar residues; that stretch reads NLANSSEPQQPSGQY. Polar residues predominate over residues 260–269; the sequence is VMTSSTENLK. Low complexity predominate over residues 270–279; the sequence is NGNNQQNQQP. Positions 392–409 are enriched in polar residues; sequence RSPMTSTPSYKEQGFKND. Low complexity predominate over residues 448–475; that stretch reads SDTYPVSSSTTSTWPSHTTTPTTTTAAA. Residues 499–567 form the SoHo domain; sequence VMSTNMDEPI…FINPSNVTDG (69 aa). The segment covering 544–557 has biased composition (basic and acidic residues); sequence RKGEDGSNEGKEQH. A compositionally biased stretch (polar residues) spans 559–589; it reads INPSNVTDGIGRTTPTASNLGRSRENLSFNQ. Positions 610-642 form a coiled coil; the sequence is YNNQERVKQSNEEELLRLKAEKLAEELRKEKER. SH3 domains follow at residues 683 to 742, 745 to 805, and 946 to 1005; these read QPVM…INTG, GDSQ…PIEQ, and KGSE…VKRH.

As to quaternary structure, may interact with deb-1. In terms of tissue distribution, expressed in body wall muscles, muscle arm attachment sites at the nerve ring, all non-striated muscles, and distal tip cells of the gonad. Highly expressed in the origins and insertions of the vulval and anal depressor muscles and the spicule-associated and diagonal muscles of the male tail. Expressed in small puncta throughout the uterus, stomatointestinal muscle and proximal gonadal sheath tissues. Not expressed in the pharynx.

The protein resides in the cell junction. The protein localises to the adherens junction. It is found in the cell membrane. It localises to the focal adhesion. Functionally, required for organization of sarcomeres in body wall muscles and for maintaining normal mitochondrial position in myocytes. The chain is Sorbin and SH3 domain-containing protein 1 homolog from Caenorhabditis elegans.